The primary structure comprises 248 residues: Probable transcriptional regulatory protein Ccel_0181 (248 aa).

It belongs to the TACO1 family.

It is found in the cytoplasm. The polypeptide is Probable transcriptional regulatory protein Ccel_0181 (Ruminiclostridium cellulolyticum (strain ATCC 35319 / DSM 5812 / JCM 6584 / H10) (Clostridium cellulolyticum)).